Reading from the N-terminus, the 52-residue chain is Repressor-like protein SSo7c3 (52 aa).

The SpoVT-AbrB domain maps to Glu4–Ser51.

In Saccharolobus solfataricus (strain ATCC 35092 / DSM 1617 / JCM 11322 / P2) (Sulfolobus solfataricus), this protein is Repressor-like protein SSo7c3.